The chain runs to 338 residues: Fructose-1,6-bisphosphatase class 1 (338 aa).

The Mg(2+) site is built by E92, D115, L117, and D118. Substrate-binding positions include 118 to 121 (DGSS), N211, Y244, and K274. E280 is a binding site for Mg(2+).

Belongs to the FBPase class 1 family. In terms of assembly, homotetramer. The cofactor is Mg(2+).

The protein resides in the cytoplasm. The enzyme catalyses beta-D-fructose 1,6-bisphosphate + H2O = beta-D-fructose 6-phosphate + phosphate. Its pathway is carbohydrate biosynthesis; gluconeogenesis. This Photobacterium profundum (strain SS9) protein is Fructose-1,6-bisphosphatase class 1.